Consider the following 206-residue polypeptide: Acidic proline-rich protein PRP33 (206 aa).

An N-terminal signal peptide occupies residues 1–13; sequence MLVVLLTAALLVL. Residues 15 to 206 are disordered; it reads SAHGSDEEVI…EQPSYLWFSS (192 aa). Acidic residues predominate over residues 55 to 71; that stretch reads ENGDGDDSDDGDDDGSG. 6 consecutive repeat copies span residues 80 to 97, 98 to 115, 116 to 133, 134 to 152, 153 to 170, and 171 to 189. The tract at residues 80–189 is 6 X 18 AA approximate tandem repeats; sequence PPPHGGNHQR…RPPQPRKPQD (110 aa). Residues 103–112 show a composition bias toward low complexity; the sequence is GPQTSSQPGN. The span at 113 to 174 shows a compositional bias: pro residues; the sequence is PQGPPPQGGP…PGNPQGPPPQ (62 aa).

The protein localises to the secreted. Its function is as follows. May protect teeth by binding to tannins. The polypeptide is Acidic proline-rich protein PRP33 (Prpg1) (Rattus norvegicus (Rat)).